Consider the following 485-residue polypeptide: Shutoff alkaline exonuclease (485 aa).

The protein belongs to the herpesviridae alkaline nuclease family. In terms of assembly, forms a complex with the DNA polymerase, the DNA polymerase processivity factor, and the major DNA binding protein.

It localises to the host nucleus. The protein localises to the host cytoplasm. Functionally, plays a role in processing non linear or branched viral DNA intermediates in order to promote the production of mature packaged unit-length linear progeny viral DNA molecules. Exhibits endonuclease and exonuclease activities and accepts both double-stranded and single-stranded DNA as substrate. Exonuclease digestion of DNA is in the 5'-&gt; 3' direction and the products are 5'-monophosphate nucleosides. Additionally, forms a recombinase with the major DNA-binding protein, which displays strand exchange activity. Also acts as a cytoplasmic RNA endonuclease that induces degradation of the majority of the cellular messenger RNAs during early lytic infection. The resulting inhibition of cellular protein synthesis serves to ensure maximal viral gene expression and evasion from host immune response. Internally cleaves host mRNAs which are then degraded by the cellular exonuclease XRN1. Bypasses therefore the regulatory steps of deadenylation and decapping normally required for XRN1 activation. This is Shutoff alkaline exonuclease (37) from Alcelaphine herpesvirus 1 (strain C500) (AlHV-1).